The sequence spans 134 residues: Cytochrome c-type biogenesis protein CcmE (134 aa).

Residues 1–7 (MKRKYRR) lie on the Cytoplasmic side of the membrane. A helical; Signal-anchor for type II membrane protein transmembrane segment spans residues 8 to 28 (LFVVIITLSIFAGSVVLVLGK). The Periplasmic portion of the chain corresponds to 29–134 (LKNNVSFFYT…MPNKYKTNDL (106 aa)). Residues His-120 and Tyr-124 each coordinate heme.

It belongs to the CcmE/CycJ family.

It localises to the cell inner membrane. In terms of biological role, heme chaperone required for the biogenesis of c-type cytochromes. Transiently binds heme delivered by CcmC and transfers the heme to apo-cytochromes in a process facilitated by CcmF and CcmH. The protein is Cytochrome c-type biogenesis protein CcmE of Ehrlichia ruminantium (strain Welgevonden).